Consider the following 128-residue polypeptide: uncharacterized protein (128 aa).

3 helical membrane passes run 30–50 (ILFT…LGSS), 65–85 (VFRG…LGIQ), and 93–113 (WEVA…PDIV).

It is found in the cell membrane. This is an uncharacterized protein from Rickettsia prowazekii (strain Madrid E).